The sequence spans 600 residues: Elongation factor 4 (600 aa).

The tr-type G domain occupies 5–187 (KYIRNFSIIA…AIVNKLPPPK (183 aa)). Residues 17–22 (DHGKST) and 134–137 (NKLD) contribute to the GTP site.

It belongs to the TRAFAC class translation factor GTPase superfamily. Classic translation factor GTPase family. LepA subfamily.

The protein resides in the cell inner membrane. It catalyses the reaction GTP + H2O = GDP + phosphate + H(+). In terms of biological role, required for accurate and efficient protein synthesis under certain stress conditions. May act as a fidelity factor of the translation reaction, by catalyzing a one-codon backward translocation of tRNAs on improperly translocated ribosomes. Back-translocation proceeds from a post-translocation (POST) complex to a pre-translocation (PRE) complex, thus giving elongation factor G a second chance to translocate the tRNAs correctly. Binds to ribosomes in a GTP-dependent manner. This Rickettsia conorii (strain ATCC VR-613 / Malish 7) protein is Elongation factor 4.